Consider the following 363-residue polypeptide: Fructose-bisphosphate aldolase (363 aa).

Substrate-binding residues include Arg56 and Lys147. The active-site Proton acceptor is Glu188. The active-site Schiff-base intermediate with dihydroxyacetone-P is the Lys230.

The protein belongs to the class I fructose-bisphosphate aldolase family.

It carries out the reaction beta-D-fructose 1,6-bisphosphate = D-glyceraldehyde 3-phosphate + dihydroxyacetone phosphate. The protein operates within carbohydrate degradation; glycolysis; D-glyceraldehyde 3-phosphate and glycerone phosphate from D-glucose: step 4/4. This Schistosoma mansoni (Blood fluke) protein is Fructose-bisphosphate aldolase.